A 447-amino-acid chain; its full sequence is Tubulin beta-6 chain (447 aa).

GTP contacts are provided by Gln-11, Glu-69, Ser-138, Gly-142, Thr-143, Gly-144, Asn-204, and Asn-226. Glu-69 serves as a coordination point for Mg(2+). Residues 426 to 447 are disordered; it reads QDATAEEEGEFDEDEELDDGMM. The span at 429–447 shows a compositional bias: acidic residues; sequence TAEEEGEFDEDEELDDGMM.

This sequence belongs to the tubulin family. In terms of assembly, dimer of alpha and beta chains. A typical microtubule is a hollow water-filled tube with an outer diameter of 25 nm and an inner diameter of 15 nM. Alpha-beta heterodimers associate head-to-tail to form protofilaments running lengthwise along the microtubule wall with the beta-tubulin subunit facing the microtubule plus end conferring a structural polarity. Microtubules usually have 13 protofilaments but different protofilament numbers can be found in some organisms and specialized cells. Mg(2+) serves as cofactor.

The protein resides in the cytoplasm. It is found in the cytoskeleton. In terms of biological role, tubulin is the major constituent of microtubules, a cylinder consisting of laterally associated linear protofilaments composed of alpha- and beta-tubulin heterodimers. Microtubules grow by the addition of GTP-tubulin dimers to the microtubule end, where a stabilizing cap forms. Below the cap, tubulin dimers are in GDP-bound state, owing to GTPase activity of alpha-tubulin. The chain is Tubulin beta-6 chain (TUBB6) from Ectocarpus variabilis (Brown alga).